Consider the following 386-residue polypeptide: MAEIPTSSNPSDDLETQKLNGNEEDYDHHHDEDPESDDENYEYALQIAEMLPFPMVMKTAIELDLLGIIATAGPDRQLSAAEIAAALPAAGNPDAPAMLDRMLYLLATYSVVTCTAVDGGASGGVVRKYGLAPVAKYFVSNKDGVSLGALISLNQGQAFLASWSKLKEAVLEGGIPFNKFHGMEVFHYQGTDPRFNEIFNKAMYDQSTYTIKKIVRRYKGFENIQRLVDVGGGLGHTLRVITSNYPSIKGINFDLPHVIQHAPTIPGVEHVGGDMFESIPNGDAIFMKCLLHDWSDEHCLKILKNCYKALPRKGKVIVVEMNMIEEPQTTPLAKAISQLDVGMMTQSPGGKERTRREFQTLAEAAGFAEFNPVCHVACFWVMEFLK.

S-adenosyl-L-homocysteine-binding residues include S207, G231, D254, D274, and K288. D254 serves as a coordination point for S-adenosyl-L-methionine. The Proton acceptor role is filled by H292.

The protein belongs to the class I-like SAM-binding methyltransferase superfamily. Cation-independent O-methyltransferase family. In terms of assembly, homodimer.

It catalyses the reaction dopamine + S-adenosyl-L-methionine = 4-methoxytyramine + S-adenosyl-L-homocysteine + H(+). The enzyme catalyses 3,4-dihydroxy-5-methoxyphenethylamine + S-adenosyl-L-methionine = 3-hydroxy-4,5-dimethoxyphenethylamine + S-adenosyl-L-homocysteine + H(+). The catalysed reaction is 3-hydroxy-4,5-dimethoxyphenethylamine + S-adenosyl-L-methionine = mescaline + S-adenosyl-L-homocysteine + H(+). It carries out the reaction 4-hydroxy-3,5-dimethoxyphenethylamine + S-adenosyl-L-methionine = mescaline + S-adenosyl-L-homocysteine + H(+). It participates in aromatic compound metabolism. It functions in the pathway alkaloid biosynthesis. In terms of biological role, O-methyltransferase participating in the biosynthesis of natural products derived from phenylethylamine, including mescaline, a natural hallucinogen potentially used in psychotherapeutic treatments. Catalyzes the O-methylation of mescaline para hydroxyl groups, using dopamine, 3,4-dihydroxy-5-methoxyphenethylamine, 3-hydroxy-4,5-dimethoxyphenethylamine and 4-hydroxy-3,5-dimethoxyphenethylamine as substrates. In Lophophora williamsii (Peyote), this protein is O-methyltransferase 10.